The following is a 1089-amino-acid chain: SUMO-specific isopeptidase USPL1 (1089 aa).

The interval 90 to 128 (LISPDSEDCPTPSKPQKRKRLETNCRNSPLPVHSKKTRS) is disordered. Residues 215–488 (VQWKNTQALC…ETHIVIWERK (274 aa)) enclose the USP domain. The Nucleophile role is filled by Cys-224. The segment at 224–483 (CWLDCILSAL…EVPASETHIV (260 aa)) is SUMO-binding. His-444 functions as the Proton acceptor in the catalytic mechanism. Disordered stretches follow at residues 687 to 739 (DSQT…KEDQ), 791 to 817 (ISRR…SPPL), 835 to 868 (LREQ…AAED), and 891 to 928 (LISS…CGSP). A compositionally biased stretch (polar residues) spans 719–733 (TASSKTVAARSAQNQ). The segment covering 791–803 (ISRRSKRMSRKAK) has biased composition (basic residues). Position 894 is a phosphoserine (Ser-894). Basic and acidic residues predominate over residues 895–907 (PHREPSLSDHSEP).

The protein belongs to the peptidase C19 family. Interacts with ELL.

The protein resides in the nucleus. It localises to the cajal body. In terms of biological role, SUMO-specific isopeptidase involved in protein desumoylation. Specifically binds SUMO proteins with a higher affinity for SUMO2 and SUMO3 which it cleaves more efficiently. Also able to process full-length SUMO proteins to their mature forms. Plays a key role in RNA polymerase-II-mediated snRNA transcription in the Cajal bodies. Is a component of complexes that can bind to U snRNA genes. In Mus musculus (Mouse), this protein is SUMO-specific isopeptidase USPL1 (Uspl1).